Reading from the N-terminus, the 178-residue chain is MDRPGPGSARPGRTVHVWGYRVEWKVRNGRKLQPSEWAGRGDLGGFKRRWKDTRATVGTTFRRRSRVSLVGELSKFPLPSDSSGGKSSSSFARGALAWCRQRNPNPSCAAAETGARTSLPKERCRGWRLGNWLHKHPHPNTCPRLPACWLPPILTERGERVPKLVPLLACYPKSKPKD.

The DNA-binding element occupies 8-50 (SARPGRTVHVWGYRVEWKVRNGRKLQPSEWAGRGDLGGFKRRW).

It localises to the nucleus. Functionally, DNA-binding protein involved in S phase checkpoint control-coupled apoptosis by mediating p53/TP53-induced apoptosis. Has the ability to inhibit DNA synthesis and S phase arrest coupled to apoptosis. Has affinity to both double- and single-stranded DNA. In Homo sapiens (Human), this protein is Killin (KLLN).